Consider the following 968-residue polypeptide: RNA polymerase-associated protein RapA (968 aa).

A Helicase ATP-binding domain is found at 163-332 (EVGRRYAPRV…FARLRLLDPD (170 aa)). 176-183 (DEVGLGKT) is an ATP binding site. The short motif at 278–281 (DEAH) is the DEAH box element. Positions 491-655 (RVDWLIEFLK…EFAEDLLNVL (165 aa)) constitute a Helicase C-terminal domain.

Belongs to the SNF2/RAD54 helicase family. RapA subfamily. In terms of assembly, interacts with the RNAP. Has a higher affinity for the core RNAP than for the holoenzyme. Its ATPase activity is stimulated by binding to RNAP.

Functionally, transcription regulator that activates transcription by stimulating RNA polymerase (RNAP) recycling in case of stress conditions such as supercoiled DNA or high salt concentrations. Probably acts by releasing the RNAP, when it is trapped or immobilized on tightly supercoiled DNA. Does not activate transcription on linear DNA. Probably not involved in DNA repair. In Shewanella baltica (strain OS223), this protein is RNA polymerase-associated protein RapA.